The primary structure comprises 629 residues: MFYQDPFDVIIIGGGHAGTEAAMAAARMGQQTLLLTHNIDTLGQMSCNPAIGGIGKGHLVKEVDALGGLMAKAIDHAGIQFRILNASKGPAVRATRAQADRVLYRQAVRTALENQPNLMIFQQAVEDLIVENDRVVGAVTQMGLKFRAKAVVLTVGTFLDGKIHIGLDNYSGGRAGDPPSISLSRRLRELPLRVNRLKTGTPPRIDARTIDFSVLAQQHGDTPIPVFSFMGNAAQHPQQVPCYITHTNEKTHDVIRNNLDRSPMYAGVIEGIGPRYCPSIEDKVMRFADRNQHQIFLEPEGLTSNEIYPNGISTSLPFDVQIQIVRSMQGMENAKIVRPGYAIEYDFFDPRDLKPTLESKFIQGLFFAGQINGTTGYEEAAAQGLLAGLNAARFSAEKEGWAPRRDQAYLGVLVDDLSTMGTKEPYRMFTSRAEYRLMLREDNADLRLTEMGRELGLVDDERWARFNEKLERIETERQRLKSTWVNPLADSVAEVNAHLAAPLSREASGEDLLRRPGMTYEQLVQMTPFAPGLDDAEAAEQVEIQIKYEGYIARQQDEIEKQQRNENTLLPEMLDYRQVTGLSNEVIAKLNDHKPVSIGQASRISGVTPAAISILLVWLKKQGMLRRSA.

FAD-binding positions include 13-18, valine 125, and serine 180; that span reads GGGHAG. 273-287 is an NAD(+) binding site; the sequence is GPRYCPSIEDKVMRF. Glutamine 370 contributes to the FAD binding site.

This sequence belongs to the MnmG family. In terms of assembly, homodimer. Heterotetramer of two MnmE and two MnmG subunits. It depends on FAD as a cofactor.

The protein resides in the cytoplasm. In terms of biological role, NAD-binding protein involved in the addition of a carboxymethylaminomethyl (cmnm) group at the wobble position (U34) of certain tRNAs, forming tRNA-cmnm(5)s(2)U34. This chain is tRNA uridine 5-carboxymethylaminomethyl modification enzyme MnmG, found in Enterobacter sp. (strain 638).